The following is a 570-amino-acid chain: Urease subunit alpha (570 aa).

In terms of domain architecture, Urease spans 131–570; it reads GGMDSHIHFI…LPMAQRYFLF (440 aa). Ni(2+) is bound by residues histidine 136, histidine 138, and lysine 219. Position 219 is an N6-carboxylysine (lysine 219). Histidine 221 provides a ligand contact to substrate. Positions 248 and 274 each coordinate Ni(2+). The Proton donor role is filled by histidine 322. Aspartate 362 provides a ligand contact to Ni(2+).

Belongs to the metallo-dependent hydrolases superfamily. Urease alpha subunit family. In terms of assembly, heterotrimer of UreA (gamma), UreB (beta) and UreC (alpha) subunits. Three heterotrimers associate to form the active enzyme. It depends on Ni cation as a cofactor. Post-translationally, carboxylation allows a single lysine to coordinate two nickel ions.

It is found in the cytoplasm. It catalyses the reaction urea + 2 H2O + H(+) = hydrogencarbonate + 2 NH4(+). It participates in nitrogen metabolism; urea degradation; CO(2) and NH(3) from urea (urease route): step 1/1. This is Urease subunit alpha from Rhizobium etli (strain ATCC 51251 / DSM 11541 / JCM 21823 / NBRC 15573 / CFN 42).